A 334-amino-acid chain; its full sequence is Holliday junction branch migration complex subunit RuvB (334 aa).

The large ATPase domain (RuvB-L) stretch occupies residues 4-184 (ADRLISAEPI…FGIVQRLEFY (181 aa)). Residues I23, R24, G65, K68, T69, T70, 131 to 133 (EDY), R174, Y184, and R221 contribute to the ATP site. T69 is a binding site for Mg(2+). Residues 185-255 (QVADLQHIVS…VAMQALDMLN (71 aa)) form a small ATPAse domain (RuvB-S) region. Positions 258–334 (AEGFDYMDRK…YKHFGMVREE (77 aa)) are head domain (RuvB-H). Positions 294, 313, and 318 each coordinate DNA.

Belongs to the RuvB family. In terms of assembly, homohexamer. Forms an RuvA(8)-RuvB(12)-Holliday junction (HJ) complex. HJ DNA is sandwiched between 2 RuvA tetramers; dsDNA enters through RuvA and exits via RuvB. An RuvB hexamer assembles on each DNA strand where it exits the tetramer. Each RuvB hexamer is contacted by two RuvA subunits (via domain III) on 2 adjacent RuvB subunits; this complex drives branch migration. In the full resolvosome a probable DNA-RuvA(4)-RuvB(12)-RuvC(2) complex forms which resolves the HJ.

It localises to the cytoplasm. It catalyses the reaction ATP + H2O = ADP + phosphate + H(+). The RuvA-RuvB-RuvC complex processes Holliday junction (HJ) DNA during genetic recombination and DNA repair, while the RuvA-RuvB complex plays an important role in the rescue of blocked DNA replication forks via replication fork reversal (RFR). RuvA specifically binds to HJ cruciform DNA, conferring on it an open structure. The RuvB hexamer acts as an ATP-dependent pump, pulling dsDNA into and through the RuvAB complex. RuvB forms 2 homohexamers on either side of HJ DNA bound by 1 or 2 RuvA tetramers; 4 subunits per hexamer contact DNA at a time. Coordinated motions by a converter formed by DNA-disengaged RuvB subunits stimulates ATP hydrolysis and nucleotide exchange. Immobilization of the converter enables RuvB to convert the ATP-contained energy into a lever motion, pulling 2 nucleotides of DNA out of the RuvA tetramer per ATP hydrolyzed, thus driving DNA branch migration. The RuvB motors rotate together with the DNA substrate, which together with the progressing nucleotide cycle form the mechanistic basis for DNA recombination by continuous HJ branch migration. Branch migration allows RuvC to scan DNA until it finds its consensus sequence, where it cleaves and resolves cruciform DNA. The chain is Holliday junction branch migration complex subunit RuvB from Serratia proteamaculans (strain 568).